We begin with the raw amino-acid sequence, 376 residues long: Heme chaperone HemW (376 aa).

The region spanning 1–236 is the Radical SAM core domain; sequence MFKLPPISLY…LKQSGYKKYE (236 aa). Residue Tyr10 coordinates S-adenosyl-L-methionine. [4Fe-4S] cluster-binding residues include Cys16, Cys20, and Cys23. S-adenosyl-L-methionine is bound by residues Gly66, 67-68, Glu99, Gln126, Arg138, and Asp162; that span reads GT.

The protein belongs to the anaerobic coproporphyrinogen-III oxidase family. HemW subfamily. The cofactor is [4Fe-4S] cluster.

The protein resides in the cytoplasm. In terms of biological role, probably acts as a heme chaperone, transferring heme to an unknown acceptor. Binds one molecule of heme per monomer, possibly covalently. Binds 1 [4Fe-4S] cluster. The cluster is coordinated with 3 cysteines and an exchangeable S-adenosyl-L-methionine. The sequence is that of Heme chaperone HemW from Buchnera aphidicola subsp. Schizaphis graminum (strain Sg).